The primary structure comprises 316 residues: Transmembrane protein 231 (316 aa).

Residues 23 to 43 traverse the membrane as a helical segment; sequence AALFLLLAAALTYIPPLLVAF. 3 N-linked (GlcNAc...) asparagine glycosylation sites follow: Asn-194, Asn-199, and Asn-221. A helical membrane pass occupies residues 262 to 282; sequence FWEMVKFAWVQYVSILLIFLW.

This sequence belongs to the TMEM231 family. In terms of assembly, part of the tectonic-like complex (also named B9 complex). Interacts with TMEM107.

Its subcellular location is the cell projection. It is found in the cilium membrane. Its function is as follows. Transmembrane component of the tectonic-like complex, a complex localized at the transition zone of primary cilia and acting as a barrier that prevents diffusion of transmembrane proteins between the cilia and plasma membranes. Required for ciliogenesis and sonic hedgehog/SHH signaling. In Homo sapiens (Human), this protein is Transmembrane protein 231 (TMEM231).